We begin with the raw amino-acid sequence, 375 residues long: VDFNVPLKDGQVKDPTRIQGSIPSIKKILEQNPKGLVLMSHLGRPDGNRVEKHSMKPVVPKLEQLLGTKVKFLNDCVGKDVEEAVKSSRNGEIILLENLRFHAEEEGKSIDAAGNKVKADPKAVKEFRKSLTSLGDLYVNDAFGTAHRAHSSMVGVDHKIRAAGYLLKKELDYFSKALESPNRPFLVVLGGAKVKDKIQLIESMIDKVDEMIIGGGMAFTFLKRIHNMEIGNSLFDEEGYKIVDQLLEKAKAKGVKIHLPVDFLCGDSLEANANTQIHDLISGIPKGWIGLDAGPKTIALNADAVARANTIVWNGPQGRFEVDKFRQGSADLLKRVSARTAAGATSIIGGGDTVNLVQQEKATDKVSHVSTGGGE.

Val1, Asp2, Phe3, Asn4, Arg17, Ser40, His41, Gly43, Arg44, Leu99, Arg100, His147, and Arg148 together coordinate (2R)-3-phosphoglycerate. Residue Gly191 coordinates ADP. Gly191 serves as a coordination point for CDP. Residues Ala192 and Lys193 each coordinate AMP. Ala192 is a binding site for ATP. A Mg(2+)-binding site is contributed by Ala192. CDP is bound at residue Asp196. Asp196 provides a ligand contact to Mg(2+). Lys197 contacts AMP. An ATP-binding site is contributed by Lys197. Gly215 contributes to the ADP binding site. Residue Gly215 coordinates CDP. AMP is bound by residues Gly216 and Gly290. The ATP site is built by Gly216 and Gly290. CDP contacts are provided by Gly315 and Phe320. Residue Phe320 participates in ADP binding. Glu321 contacts AMP. Residues Glu321, Asp352, and Thr353 each contribute to the ATP site. Asp352 lines the Mg(2+) pocket.

This sequence belongs to the phosphoglycerate kinase family. In terms of assembly, monomer. Mg(2+) is required as a cofactor.

It catalyses the reaction (2R)-3-phosphoglycerate + ATP = (2R)-3-phospho-glyceroyl phosphate + ADP. It functions in the pathway carbohydrate degradation; glycolysis; pyruvate from D-glyceraldehyde 3-phosphate: step 2/5. This is Phosphoglycerate kinase (PGK) from Tetrahymena pyriformis.